Consider the following 329-residue polypeptide: Ketol-acid reductoisomerase (NADP(+)) (329 aa).

Residues 2-182 enclose the KARI N-terminal Rossmann domain; the sequence is VEIYYDDDAS…GGTRAGALRT (181 aa). NADP(+) is bound by residues 25 to 28, serine 51, and serine 53; that span reads YGSQ. Histidine 108 is a catalytic residue. Glycine 134 contacts NADP(+). The 146-residue stretch at 183–328 folds into the KARI C-terminal knotted domain; it reads TFTEETETDL…AKLRPMMSWI (146 aa). 4 residues coordinate Mg(2+): aspartate 191, glutamate 195, glutamate 227, and glutamate 231. Serine 252 provides a ligand contact to substrate.

This sequence belongs to the ketol-acid reductoisomerase family. The cofactor is Mg(2+).

It catalyses the reaction (2R)-2,3-dihydroxy-3-methylbutanoate + NADP(+) = (2S)-2-acetolactate + NADPH + H(+). It carries out the reaction (2R,3R)-2,3-dihydroxy-3-methylpentanoate + NADP(+) = (S)-2-ethyl-2-hydroxy-3-oxobutanoate + NADPH + H(+). Its pathway is amino-acid biosynthesis; L-isoleucine biosynthesis; L-isoleucine from 2-oxobutanoate: step 2/4. The protein operates within amino-acid biosynthesis; L-valine biosynthesis; L-valine from pyruvate: step 2/4. Functionally, involved in the biosynthesis of branched-chain amino acids (BCAA). Catalyzes an alkyl-migration followed by a ketol-acid reduction of (S)-2-acetolactate (S2AL) to yield (R)-2,3-dihydroxy-isovalerate. In the isomerase reaction, S2AL is rearranged via a Mg-dependent methyl migration to produce 3-hydroxy-3-methyl-2-ketobutyrate (HMKB). In the reductase reaction, this 2-ketoacid undergoes a metal-dependent reduction by NADPH to yield (R)-2,3-dihydroxy-isovalerate. This chain is Ketol-acid reductoisomerase (NADP(+)), found in Frankia casuarinae (strain DSM 45818 / CECT 9043 / HFP020203 / CcI3).